Reading from the N-terminus, the 269-residue chain is Tropinone reductase homolog At2g29320 (269 aa).

L19–H43 contacts NADP(+). S152 serves as a coordination point for substrate. Y166 acts as the Proton acceptor in catalysis.

The protein belongs to the short-chain dehydrogenases/reductases (SDR) family. SDR65C subfamily.

This chain is Tropinone reductase homolog At2g29320, found in Arabidopsis thaliana (Mouse-ear cress).